Reading from the N-terminus, the 385-residue chain is Mannitol-1-phosphate 5-dehydrogenase (385 aa).

3–14 (ALQFGAGNIGRG) lines the NAD(+) pocket.

The protein belongs to the mannitol dehydrogenase family.

The catalysed reaction is D-mannitol 1-phosphate + NAD(+) = beta-D-fructose 6-phosphate + NADH + H(+). The polypeptide is Mannitol-1-phosphate 5-dehydrogenase (Buchnera aphidicola subsp. Acyrthosiphon pisum (strain Tuc7)).